The sequence spans 907 residues: DNA ligase 4 (907 aa).

ATP-binding residues include glutamate 273, lysine 275, arginine 280, glutamate 333, phenylalanine 378, glutamate 438, lysine 443, lysine 460, and lysine 462. Lysine 275 functions as the N6-AMP-lysine intermediate in the catalytic mechanism. Glutamate 333 serves as a coordination point for Mg(2+). Glutamate 438 contacts Mg(2+). 2 BRCT domains span residues 655-754 (PVSN…ESDI) and 800-906 (VPLF…HYQC).

This sequence belongs to the ATP-dependent DNA ligase family. Requires Mg(2+) as cofactor.

It localises to the nucleus. It catalyses the reaction ATP + (deoxyribonucleotide)n-3'-hydroxyl + 5'-phospho-(deoxyribonucleotide)m = (deoxyribonucleotide)n+m + AMP + diphosphate.. Its function is as follows. DNA ligase involved in DNA non-homologous end joining (NHEJ); required for double-strand break (DSB) repair. The sequence is that of DNA ligase 4 (LIG4) from Kluyveromyces lactis (strain ATCC 8585 / CBS 2359 / DSM 70799 / NBRC 1267 / NRRL Y-1140 / WM37) (Yeast).